A 1147-amino-acid polypeptide reads, in one-letter code: Nucleolar protein 8 (1147 aa).

An RRM domain is found at 8–89 (KRLFVGGLGQ…GTLQIQLAKE (82 aa)). K225 participates in a covalent cross-link: Glycyl lysine isopeptide (Lys-Gly) (interchain with G-Cter in SUMO2). Phosphoserine occurs at positions 300 and 306. Residue K316 forms a Glycyl lysine isopeptide (Lys-Gly) (interchain with G-Cter in SUMO2) linkage. At Y362 the chain carries Phosphotyrosine. S364 and S365 each carry phosphoserine. Phosphothreonine is present on T367. Residues 379–401 (KVKNSAESSQPERTVSKKSSFQK) are disordered. Residues 383-400 (SAESSQPERTVSKKSSFQ) are compositionally biased toward polar residues. Position 416 is a phosphoserine (S416). Disordered regions lie at residues 427–452 (KFVN…EEYK), 472–511 (AGSH…DLYN), 592–659 (MENG…PLKA), 686–741 (KALE…EDNQ), 766–888 (ANLD…NEDE), 932–963 (KHDH…AEKL), and 986–1017 (SNTD…TLAC). Over residues 441 to 450 (DSEESEEDEE) the composition is skewed to acidic residues. 2 stretches are compositionally biased toward polar residues: residues 592–610 (MENG…TSCQ) and 629–650 (TFEN…STNP). Basic and acidic residues-rich tracts occupy residues 700 to 714 (SLEK…EDPQ) and 732 to 741 (AKDKQAEDNQ). S704 carries the phosphoserine modification. A Phosphothreonine modification is found at T777. Phosphoserine is present on residues S783 and S787. The segment covering 799–809 (CPEKELMKESV) has biased composition (basic and acidic residues). Phosphoserine is present on residues S819, S820, S825, S827, and S872. Over residues 857-883 (SDERFRMDSRFLESDSEDEKKELNEDK) the composition is skewed to basic and acidic residues. 2 coiled-coil regions span residues 868 to 898 (LESD…KTLN) and 937 to 963 (IYER…AEKL). The segment covering 994–1011 (DVPRTEAGAREGTGKIRN) has biased composition (basic and acidic residues). K1038 is covalently cross-linked (Glycyl lysine isopeptide (Lys-Gly) (interchain with G-Cter in SUMO2)). The segment at 1055 to 1086 (PNDPRFQDSSSEEEDIAEEADHSKPSPGEAVP) is disordered. 4 positions are modified to phosphoserine: S1063, S1064, S1065, and S1080.

Interacts with the GTP form of RRAGA, RRAGC and RRAGD. Interacts with NIP7. Interacts with DDX18; the interaction is RNA-dependent. Interacts with DDX47; the interaction is RNA-dependent. Phosphorylated.

It localises to the nucleus. It is found in the nucleolus. Plays an essential role in the survival of diffuse-type gastric cancer cells. Acts as a nucleolar anchoring protein for DDX47. May be involved in regulation of gene expression at the post-transcriptional level or in ribosome biogenesis in cancer cells. This Mus musculus (Mouse) protein is Nucleolar protein 8.